A 453-amino-acid polypeptide reads, in one-letter code: AP-4 complex subunit mu-1 (453 aa).

The 269-residue stretch at 184–452 (KNEVFLDVVE…LSHSNAYVIR (269 aa)) folds into the MHD domain. The tract at residues 383-403 (PGLQGPPSRGPSPSAPPLGLG) is disordered.

The protein belongs to the adaptor complexes medium subunit family. In terms of assembly, adaptor protein complex 4 (AP-4) is a heterotetramer composed of two large adaptins (epsilon-type subunit AP4E1 and beta-type subunit AP4B1), a medium adaptin (mu-type subunit AP4M1) and a small adaptin (sigma-type AP4S1). Interacts with tyrosine-based sorting signals on the cytoplasmic tail of cargo proteins such as APP, ATG9A, LAMP2 and NAGPA. Interacts with the C-terminal domain of GRID2. Interacts with GRIA1 and GRIA2; the interaction is indirect via CACNG3. Interacts with CACNG3; CACNG3 associates GRIA1 and GRIA2 with the adaptor protein complex 4 (AP-4) to target them to the somatodendritic compartment of neurons. Interacts with HOOK1 and HOOK2; the interactions are direct, mediate the interaction between FTS-Hook-FHIP (FHF) complex and AP-4 and the perinuclear distribution of AP-4. As to expression, high levels in the olfactory bulb, the cerebral cortex, the granule and Purkinje cell layers of the cerebellar cortex and the CA3 region of the hippocampus. Low levels found in molecular layer of cerebellum.

It localises to the golgi apparatus. The protein resides in the trans-Golgi network membrane. It is found in the early endosome. Its function is as follows. Component of the adaptor protein complex 4 (AP-4). Adaptor protein complexes are vesicle coat components involved both in vesicle formation and cargo selection. They control the vesicular transport of proteins in different trafficking pathways. AP-4 forms a non clathrin-associated coat on vesicles departing the trans-Golgi network (TGN) and may be involved in the targeting of proteins from the trans-Golgi network (TGN) to the endosomal-lysosomal system. It is also involved in protein sorting to the basolateral membrane in epithelial cells and the proper asymmetric localization of somatodendritic proteins in neurons. Within AP-4, the mu-type subunit AP4M1 is directly involved in the recognition and binding of tyrosine-based sorting signals found in the cytoplasmic part of cargos. The adaptor protein complex 4 (AP-4) may also recognize other types of sorting signal. In Rattus norvegicus (Rat), this protein is AP-4 complex subunit mu-1.